Here is a 1367-residue protein sequence, read N- to C-terminus: MTHRRTAQGRRPRWLLSIISALLSAVLQTRAATGSASQVHLDLTVLIGVPLPSSVSFTTGYGGFPAYSFGPGANVGRPARTLIPPTFFRDFAIGVAVKPNSAQGGVLFAITDAFQKVIYLGLRLSSVEDGRQRVILYYTEPGSHVSREAAVFSVPVMTNRWNRFAVTVQGEEVALFMDCEEQSQVRFQRSSWPLTFEPSAGIFVGNAGAMGLERFTGSIQQLTIYSDPRTPEELCEAQESSASGEASGFQEMDEVAEIMEAVTYTQAPPKESHVDPISVPPTSSSPAEDSELSGEPVPEGTPETNLSIIGHSSPEQGSGEILNDTLEVHAMDGDPGTDDGSGDGALLNVTDGQGLSATATGEASVPVTTVLEAENGSMPTGSPTLAMFTQSIREVDTPDPENLTTTASGDGEVPTSTDGDTEADSSPTGGPTLKPREEATLGSHGEEWLTPAVSKMPLKAFEEEEASGTAIDSLDVIFTPTVVLEQVSRRPTDIQATFTPTVVLEETSGAPTDTQDALTPTVAPEQMFTAEPTDGGDLVASTEEAEEEGSGSMPPSGPPLPTPTVTPKRQVTLVGVEAEGSGPVGGLDEGSGSGDIVGNEDLLRGPPGPPGPPGSPGIPGKPGTDVFMGPPGSPGEDGAPGEPGPQGPEGQPGLDGASGQQGMKGEKGARGPNGSAGEKGDPGNRGLPGPPGKNGEVGTPGVMGPPGPPGPPGPPGPGCTTELGFEIEGSGDVRLLSKPTISGPTSPSGPKGEKGEQGAKGERGADGTSTMGPPGPRGPPGHVEVLSSSLINITNGSMNFSDIPELMGPPGPDGVPGLPGFPGPRGPKGDTGVPGFPGLKGEQGEKGEPGAILTGDVPLEMMKGRKGEPGIHGAPGPMGPKGPPGHKGEFGLPGRPGRPGLNGLKGAKGDRGVTLPGPPGLPGPPGPPGPPGAVVNIKGAVFPIPARPHCKTPVGTAHPGDPELVTFHGVKGEKGSWGLPGSKGEKGDQGAQGPPGPPVDPAYLRHFLNSLKGENEDASFRGESSNNLFVSGPPGLPGYPGLVGQKGEAVVGPQGPPGIPGLPGPPGFGRPGVPGPPGPPGPPGPPAILGAAVALPGPPGPPGQPGLPGSRNLVTALSDMGDMLQKAHLVIEGTFIYLRDSGEFFIRVRDGWKKLQLGELIPIPADSPPPPALSSNPYQPQPPLNPILSANYERPVLHLVALNTPVAGDIRADFQCFQQARAAGLLSTFRAFLSSHLQDLSTVVRKAERFGLPIVNLKGQVLFNNWDSIFSGDGGQFNTHIPIYSFDGRDVMTDPSWPQKVVWHGSNPHGVRLVDKYCEAWRTTDMAVTGFASPLSTGKILDQKAYSCANRLIVLCIENSFMTDTRK.

Residues 1 to 31 form the signal peptide; that stretch reads MTHRRTAQGRRPRWLLSIISALLSAVLQTRA. The 196-residue stretch at 54–249 folds into the Laminin G-like domain; sequence SVSFTTGYGG…SSASGEASGF (196 aa). Residues 229-604 form a nonhelical region 1 (NC1) region; that stretch reads RTPEELCEAQ…DIVGNEDLLR (376 aa). Residues Ser-243 and Ser-247 are each glycosylated (O-linked (Xyl...) (chondroitin sulfate) serine). A disordered region spans residues 267 to 319; that stretch reads APPKESHVDPISVPPTSSSPAEDSELSGEPVPEGTPETNLSIIGHSSPEQGSG. N-linked (GlcNAc...) asparagine glycosylation is found at Asn-305 and Asn-323. O-linked (Xyl...) (chondroitin sulfate) serine glycosylation is present at Ser-341. Residues Asn-348, Asn-375, and Asn-402 are each glycosylated (N-linked (GlcNAc...) asparagine). 2 disordered regions span residues 396–446 and 529–784; these read DTPD…SHGE and TAEP…GHVE. Positions 402–429 are enriched in polar residues; sequence NLTTTASGDGEVPTSTDGDTEADSSPTG. The span at 434 to 446 shows a compositional bias: basic and acidic residues; it reads KPREEATLGSHGE. Residues 555–564 are compositionally biased toward pro residues; that stretch reads PSGPPLPTPT. Gly residues predominate over residues 582–595; the sequence is GPVGGLDEGSGSGD. 2 consecutive Collagen-like domains span residues 605–665 and 666–717; these read GPPG…GMKG and EKGA…PPGP. The segment at 605-718 is triple-helical region 1 (COL1); the sequence is GPPGPPGPPG…PGPPGPPGPG (114 aa). The segment covering 606 to 616 has biased composition (pro residues); that stretch reads PPGPPGPPGSP. The N-linked (GlcNAc...) asparagine glycan is linked to Asn-673. Over residues 703–717 the composition is skewed to pro residues; that stretch reads MGPPGPPGPPGPPGP. Positions 719–748 are nonhelical region 2 (NC2); that stretch reads CTTELGFEIEGSGDVRLLSKPTISGPTSPS. A glycan (O-linked (Xyl...) (chondroitin sulfate) serine) is linked at Ser-730. The segment covering 737–750 has biased composition (low complexity); sequence SKPTISGPTSPSGP. Positions 749-783 are triple-helical region 2 (COL2); sequence GPKGEKGEQGAKGERGADGTSTMGPPGPRGPPGHV. Residues 751 to 765 are compositionally biased toward basic and acidic residues; it reads KGEKGEQGAKGERGA. The segment at 784–807 is nonhelical region 3 (NC3); the sequence is EVLSSSLINITNGSMNFSDIPELM. N-linked (GlcNAc...) asparagine glycosylation is found at Asn-792, Asn-795, and Asn-799. 2 Collagen-like domains span residues 808–850 and 863–912; these read GPPG…GEPG and KGRK…GDRG. The triple-helical region 3 (COL3) stretch occupies residues 808 to 852; the sequence is GPPGPDGVPGLPGFPGPRGPKGDTGVPGFPGLKGEQGEKGEPGAI. Positions 853–863 are nonhelical region 4 (NC4); it reads LTGDVPLEMMK. Residues 864-934 are triple-helical region 4 (COL4); that stretch reads GRKGEPGIHG…PGPPGPPGAV (71 aa). The segment at 905–930 is disordered; sequence KGAKGDRGVTLPGPPGLPGPPGPPGP. Positions 916-930 are enriched in pro residues; it reads PGPPGLPGPPGPPGP. The nonhelical region 5 (NC5) stretch occupies residues 935 to 968; that stretch reads VNIKGAVFPIPARPHCKTPVGTAHPGDPELVTFH. Residues 969 to 998 form a triple-helical region 5 (COL5) region; sequence GVKGEKGSWGLPGSKGEKGDQGAQGPPGPP. 2 disordered regions span residues 974-1000 and 1055-1089; these read KGSW…PPVD and GPPG…PAIL. The tract at residues 999-1031 is nonhelical region 6 (NC6); sequence VDPAYLRHFLNSLKGENEDASFRGESSNNLFVS. The tract at residues 1032–1086 is triple-helical region 6 (COL6); it reads GPPGLPGYPGLVGQKGEAVVGPQGPPGIPGLPGPPGFGRPGVPGPPGPPGPPGPP. The segment covering 1055-1086 has biased composition (pro residues); sequence GPPGIPGLPGPPGFGRPGVPGPPGPPGPPGPP. The tract at residues 1087–1096 is nonhelical region 7 (NC7); the sequence is AILGAAVALP. The segment at 1097 to 1111 is triple-helical region 7 (COL7); sequence GPPGPPGQPGLPGSR. Residues 1112 to 1367 form a nonhelical region 8 (NC8) region; sequence NLVTALSDMG…ENSFMTDTRK (256 aa). Cystine bridges form between Cys-1216–Cys-1356 and Cys-1318–Cys-1348.

It belongs to the multiplexin collagen family. Trimer; disulfide-linked. In terms of assembly, interacts moderately with EFEMP2. Post-translationally, prolines at the third position of the tripeptide repeating unit (G-X-Y) are hydroxylated in some or all of the chains. O-glycosylated; contains chondroitin sulfate. Detected in testis, brain, heart, kidney, skeletal muscle and skin (at protein level). Detected in heart and skeletal muscle.

It is found in the secreted. The protein resides in the extracellular space. Its subcellular location is the extracellular matrix. In terms of biological role, structural protein that stabilizes microvessels and muscle cells, both in heart and in skeletal muscle. Its function is as follows. Restin potently inhibits angiogenesis. This Mus musculus (Mouse) protein is Collagen alpha-1(XV) chain (Col15a1).